The chain runs to 399 residues: Bifunctional enzyme IspD/IspF (399 aa).

The interval Met1 to Pro235 is 2-C-methyl-D-erythritol 4-phosphate cytidylyltransferase. The segment at Ile236 to Ser399 is 2-C-methyl-D-erythritol 2,4-cyclodiphosphate synthase. Residues Asp242 and His244 each contribute to the a divalent metal cation site. 4-CDP-2-C-methyl-D-erythritol 2-phosphate-binding positions include Asp242–His244 and His275–Ser276. His283 contributes to the a divalent metal cation binding site. 4-CDP-2-C-methyl-D-erythritol 2-phosphate is bound by residues Asp297–Gly299, Phe302–Asp306, Thr373–Glu376, and Phe380.

In the N-terminal section; belongs to the IspD/TarI cytidylyltransferase family. IspD subfamily. The protein in the C-terminal section; belongs to the IspF family. Requires a divalent metal cation as cofactor.

The enzyme catalyses 2-C-methyl-D-erythritol 4-phosphate + CTP + H(+) = 4-CDP-2-C-methyl-D-erythritol + diphosphate. It carries out the reaction 4-CDP-2-C-methyl-D-erythritol 2-phosphate = 2-C-methyl-D-erythritol 2,4-cyclic diphosphate + CMP. The protein operates within isoprenoid biosynthesis; isopentenyl diphosphate biosynthesis via DXP pathway; isopentenyl diphosphate from 1-deoxy-D-xylulose 5-phosphate: step 2/6. It functions in the pathway isoprenoid biosynthesis; isopentenyl diphosphate biosynthesis via DXP pathway; isopentenyl diphosphate from 1-deoxy-D-xylulose 5-phosphate: step 4/6. Bifunctional enzyme that catalyzes the formation of 4-diphosphocytidyl-2-C-methyl-D-erythritol from CTP and 2-C-methyl-D-erythritol 4-phosphate (MEP) (IspD), and catalyzes the conversion of 4-diphosphocytidyl-2-C-methyl-D-erythritol 2-phosphate (CDP-ME2P) to 2-C-methyl-D-erythritol 2,4-cyclodiphosphate (ME-CPP) with a corresponding release of cytidine 5-monophosphate (CMP) (IspF). This is Bifunctional enzyme IspD/IspF from Lawsonia intracellularis (strain PHE/MN1-00).